The following is a 405-amino-acid chain: MQRNGVMECSVCHSKVVAPSPRSVSRAYDKHRSKISSKYRALNFLLVSGDCILVGLQPILVFMSKVDGKFQFSPISVNFLTEVTKVIFAIVMLIIQSRKQKVGEKPLLSLSTFVQAARNNALLAVPALLYAINNYLKFIMQLYFSPATVKMLSNLKVLVIAILLKFIMRRKFSIIQWEALALLLIGISVNQLSSIPDGTKSFGLAVTTIAYIYTLIFVTVPSLASVYNEYALKSQFDTSIYLQNLFLYGYGAIFNFLGILGTVIFQGPESFDILRGHSRATMFLICNNAAQGILSSFFFKYADTILKKYSSTVATIFTGLASAAFLGHTLTVNFLLGISIVFISMHQFFSPLAKVKDDKPAGALEPEDAQNHRSSDSSFVNMTAGAADDASHLTATDERKPLLPI.

Topologically, residues 1–43 (MQRNGVMECSVCHSKVVAPSPRSVSRAYDKHRSKISSKYRALN) are cytoplasmic. The chain crosses the membrane as a helical span at residues 44 to 64 (FLLVSGDCILVGLQPILVFMS). The Lumenal segment spans residues 65-74 (KVDGKFQFSP). The chain crosses the membrane as a helical span at residues 75-95 (ISVNFLTEVTKVIFAIVMLII). Residues 96-121 (QSRKQKVGEKPLLSLSTFVQAARNNA) are Cytoplasmic-facing. Residues 122 to 142 (LLAVPALLYAINNYLKFIMQL) traverse the membrane as a helical segment. Tyr-143 is a topological domain (lumenal). A helical transmembrane segment spans residues 144-164 (FSPATVKMLSNLKVLVIAILL). The Cytoplasmic portion of the chain corresponds to 165–171 (KFIMRRK). Residues 172-192 (FSIIQWEALALLLIGISVNQL) form a helical membrane-spanning segment. The Lumenal portion of the chain corresponds to 193-203 (SSIPDGTKSFG). The chain crosses the membrane as a helical span at residues 204–224 (LAVTTIAYIYTLIFVTVPSLA). The Cytoplasmic segment spans residues 225-244 (SVYNEYALKSQFDTSIYLQN). A helical transmembrane segment spans residues 245-265 (LFLYGYGAIFNFLGILGTVIF). Over 266 to 281 (QGPESFDILRGHSRAT) the chain is Lumenal. A helical membrane pass occupies residues 282 to 302 (MFLICNNAAQGILSSFFFKYA). At 303–322 (DTILKKYSSTVATIFTGLAS) the chain is on the cytoplasmic side. The helical transmembrane segment at 323-343 (AAFLGHTLTVNFLLGISIVFI) threads the bilayer. Over 344–405 (SMHQFFSPLA…TDERKPLLPI (62 aa)) the chain is Lumenal.

It belongs to the nucleotide-sugar transporter family. CMP-Sialate:CMP antiporter (TC 2.A.7.12) subfamily.

Its subcellular location is the golgi apparatus membrane. Sugar transporter involved in the transport of CMP-sialic acid from the cytoplasm into the Golgi. May transport important nucleotide sugars such as CMP-Kdo (2-keto-3-deoxy-D-manno-octulosonic acid) in physiological conditions. In Oryza sativa subsp. japonica (Rice), this protein is CMP-sialic acid transporter 4.